A 114-amino-acid chain; its full sequence is Biofilm growth-associated repressor (114 aa).

One can recognise an HTH arsR-type domain in the interval 17 to 111 (DMEKRANEVA…ALYTIFCAQE (95 aa)). A DNA-binding region (H-T-H motif) is located at residues 51 to 74 (VGELEQQIGIGQPTLSQQLGVLRE).

In terms of biological role, represses an operon that comprises itself, XF_0764, XF_0765, XF_0766 and blh. Binds to a palindromic AT-rich sequence spanning the -10 region of the blh promoter and blocks transcription of the operon. The sequence is that of Biofilm growth-associated repressor (bigR) from Xylella fastidiosa (strain 9a5c).